The chain runs to 382 residues: Mannitol-1-phosphate 5-dehydrogenase (382 aa).

3-14 (ALHFGAGNIGRG) contacts NAD(+).

This sequence belongs to the mannitol dehydrogenase family.

The catalysed reaction is D-mannitol 1-phosphate + NAD(+) = beta-D-fructose 6-phosphate + NADH + H(+). The chain is Mannitol-1-phosphate 5-dehydrogenase from Klebsiella pneumoniae (strain 342).